The following is a 221-amino-acid chain: Immediate early response gene 2 protein (221 aa).

Methionine 1 carries the post-translational modification N-acetylmethionine. Positions 54–156 (THQPEFPPSR…EGEATSEVSN (103 aa)) are disordered. The span at 64–77 (RALDPRLHPPREPE) shows a compositional bias: basic and acidic residues. Positions 125–136 (SDLSDGSDAGLV) are enriched in low complexity.

Belongs to the IER family.

Its subcellular location is the cytoplasm. The protein localises to the nucleus. DNA-binding protein that seems to act as a transcription factor. Involved in the regulation of neuronal differentiation, acts upon JNK-signaling pathway activation and plays a role in neurite outgrowth in hippocampal cells. May mediate with FIBP FGF-signaling in the establishment of laterality in the embryo. Promotes cell motility, seems to stimulate tumor metastasis. The sequence is that of Immediate early response gene 2 protein (Ier2) from Rattus norvegicus (Rat).